An 877-amino-acid chain; its full sequence is Alanine--tRNA ligase (877 aa).

Zn(2+)-binding residues include His-565, His-569, Cys-667, and His-671.

Belongs to the class-II aminoacyl-tRNA synthetase family. The cofactor is Zn(2+).

Its subcellular location is the cytoplasm. The catalysed reaction is tRNA(Ala) + L-alanine + ATP = L-alanyl-tRNA(Ala) + AMP + diphosphate. Functionally, catalyzes the attachment of alanine to tRNA(Ala) in a two-step reaction: alanine is first activated by ATP to form Ala-AMP and then transferred to the acceptor end of tRNA(Ala). Also edits incorrectly charged Ser-tRNA(Ala) and Gly-tRNA(Ala) via its editing domain. In Acidithiobacillus ferridurans, this protein is Alanine--tRNA ligase.